The following is a 143-amino-acid chain: S-adenosylmethionine decarboxylase proenzyme (143 aa).

Residue Ser66 is the Schiff-base intermediate with substrate; via pyruvic acid of the active site. A Pyruvic acid (Ser); by autocatalysis modification is found at Ser66. His71 acts as the Proton acceptor; for processing activity in catalysis. The active-site Proton donor; for catalytic activity is Cys86.

The protein belongs to the prokaryotic AdoMetDC family. Type 1 subfamily. Heterotetramer of two alpha and two beta chains arranged as a dimer of alpha/beta heterodimers. The cofactor is pyruvate. In terms of processing, is synthesized initially as an inactive proenzyme. Formation of the active enzyme involves a self-maturation process in which the active site pyruvoyl group is generated from an internal serine residue via an autocatalytic post-translational modification. Two non-identical subunits are generated from the proenzyme in this reaction, and the pyruvate is formed at the N-terminus of the alpha chain, which is derived from the carboxyl end of the proenzyme. The post-translation cleavage follows an unusual pathway, termed non-hydrolytic serinolysis, in which the side chain hydroxyl group of the serine supplies its oxygen atom to form the C-terminus of the beta chain, while the remainder of the serine residue undergoes an oxidative deamination to produce ammonia and the pyruvoyl group blocking the N-terminus of the alpha chain.

The catalysed reaction is S-adenosyl-L-methionine + H(+) = S-adenosyl 3-(methylsulfanyl)propylamine + CO2. It participates in amine and polyamine biosynthesis; S-adenosylmethioninamine biosynthesis; S-adenosylmethioninamine from S-adenosyl-L-methionine: step 1/1. In terms of biological role, catalyzes the decarboxylation of S-adenosylmethionine to S-adenosylmethioninamine (dcAdoMet), the propylamine donor required for the synthesis of the polyamines spermine and spermidine from the diamine putrescine. The chain is S-adenosylmethionine decarboxylase proenzyme from Thermococcus kodakarensis (strain ATCC BAA-918 / JCM 12380 / KOD1) (Pyrococcus kodakaraensis (strain KOD1)).